Consider the following 286-residue polypeptide: Bifunctional protein FolD 2 (286 aa).

Residues 165 to 167, Thr-192, and Ile-233 each bind NADP(+); that span reads GRG.

Belongs to the tetrahydrofolate dehydrogenase/cyclohydrolase family. As to quaternary structure, homodimer.

It carries out the reaction (6R)-5,10-methylene-5,6,7,8-tetrahydrofolate + NADP(+) = (6R)-5,10-methenyltetrahydrofolate + NADPH. It catalyses the reaction (6R)-5,10-methenyltetrahydrofolate + H2O = (6R)-10-formyltetrahydrofolate + H(+). It participates in one-carbon metabolism; tetrahydrofolate interconversion. In terms of biological role, catalyzes the oxidation of 5,10-methylenetetrahydrofolate to 5,10-methenyltetrahydrofolate and then the hydrolysis of 5,10-methenyltetrahydrofolate to 10-formyltetrahydrofolate. This Salinispora arenicola (strain CNS-205) protein is Bifunctional protein FolD 2.